A 162-amino-acid polypeptide reads, in one-letter code: MTVSREEISTILDDALFLPVKLYSLKVNQRPNHSLIEVVLDNLEHPYGSVSLLECEQVSRKLKEELERISPDLDFTLKVSSAGAERKLHLPEDIDRFRGIPVRLVFRSGESEKNQEGIFRIVNRDGDQVFLEKFQKGKKSAVKKQTTLNLKDILKGNLYVSI.

It belongs to the RimP family.

The protein resides in the cytoplasm. Functionally, required for maturation of 30S ribosomal subunits. In Leptospira borgpetersenii serovar Hardjo-bovis (strain JB197), this protein is Ribosome maturation factor RimP.